Consider the following 397-residue polypeptide: S-adenosylmethionine synthase (397 aa).

His-17 provides a ligand contact to ATP. Asp-19 is a Mg(2+) binding site. K(+) is bound at residue Glu-45. L-methionine-binding residues include Glu-58 and Gln-101. The segment at 101-111 (QSPDIAQGVDK) is flexible loop. Residues 176 to 178 (DGK), 243 to 244 (RF), Asp-252, 258 to 259 (RK), and Lys-279 each bind ATP. Position 252 (Asp-252) interacts with L-methionine. L-methionine is bound at residue Lys-283.

It belongs to the AdoMet synthase family. As to quaternary structure, homotetramer; dimer of dimers. Mg(2+) is required as a cofactor. It depends on K(+) as a cofactor.

The protein resides in the cytoplasm. The enzyme catalyses L-methionine + ATP + H2O = S-adenosyl-L-methionine + phosphate + diphosphate. The protein operates within amino-acid biosynthesis; S-adenosyl-L-methionine biosynthesis; S-adenosyl-L-methionine from L-methionine: step 1/1. Its function is as follows. Catalyzes the formation of S-adenosylmethionine (AdoMet) from methionine and ATP. The overall synthetic reaction is composed of two sequential steps, AdoMet formation and the subsequent tripolyphosphate hydrolysis which occurs prior to release of AdoMet from the enzyme. The sequence is that of S-adenosylmethionine synthase from Staphylococcus aureus (strain USA300).